A 92-amino-acid polypeptide reads, in one-letter code: LKHEDTNLASSTILRPGMNKELLGILVSYKVKVNLMVSYGGILGGLPASDVGVELPLILIHPKPPHGERAVATSSEDIVVEEFTQQNSQTQS.

The protein belongs to the arrestin family. In terms of assembly, homodimer; disulfide-linked in response to retinal illumination. Interacts with CXCR4; the interaction is dependent on the C-terminal phosphorylation of CXCR4 and modulates the calcium ion mobilization activity of CXCR4. Interacts with GPR84. In terms of tissue distribution, retina and pineal gland.

It is found in the photoreceptor inner segment. It localises to the cell projection. Its subcellular location is the cilium. The protein localises to the photoreceptor outer segment. May play a role in an as yet undefined retina-specific signal transduction. Could bind to photoactivated-phosphorylated red/green opsins. This Rattus norvegicus (Rat) protein is Arrestin-C (Arr3).